A 263-amino-acid chain; its full sequence is Isoprenyl transferase (263 aa).

Asp26 is an active-site residue. Position 26 (Asp26) interacts with Mg(2+). Substrate contacts are provided by residues 27 to 30 (GNGR), Trp31, Arg39, His43, and 71 to 73 (SSE). Asn74 acts as the Proton acceptor in catalysis. Residues Trp75, Arg77, Arg191, and 197-199 (RIS) contribute to the substrate site. Glu210 provides a ligand contact to Mg(2+). The segment at 241–263 (GRTSEQIAGQQENKNTVSNEDRV) is disordered. The span at 243 to 263 (TSEQIAGQQENKNTVSNEDRV) shows a compositional bias: polar residues.

This sequence belongs to the UPP synthase family. As to quaternary structure, homodimer. Mg(2+) serves as cofactor.

Catalyzes the condensation of isopentenyl diphosphate (IPP) with allylic pyrophosphates generating different type of terpenoids. This Nitrosomonas europaea (strain ATCC 19718 / CIP 103999 / KCTC 2705 / NBRC 14298) protein is Isoprenyl transferase.